The chain runs to 114 residues: uncharacterized protein (114 aa).

This is an uncharacterized protein from Mycobacterium bovis (strain ATCC BAA-935 / AF2122/97).